Reading from the N-terminus, the 599-residue chain is Glucose-6-phosphate 1-dehydrogenase 3, chloroplastic (599 aa).

A compositionally biased stretch (low complexity) spans 1–18; sequence MSSLSCPTYRSRTSSSSP. The tract at residues 1–23 is disordered; it reads MSSLSCPTYRSRTSSSSPFLSNH. Residues 1–66 constitute a chloroplast transit peptide; that stretch reads MSSLSCPTYR…RSQRRSVQSS (66 aa). The residue at position 67 (valine 67) is an N-acetylvaline. NADP(+) is bound by residues 119–126 and arginine 153; that span reads GASGDLAK. A disulfide bridge connects residues cysteine 171 and cysteine 179. Lysine 256 provides a ligand contact to NADP(+). D-glucose 6-phosphate-binding positions include lysine 256, 286-290, glutamate 324, and aspartate 343; that span reads HYLGK. Histidine 348 (proton acceptor) is an active-site residue. Lysine 441 is an NADP(+) binding site. Positions 444 and 449 each coordinate D-glucose 6-phosphate. NADP(+) contacts are provided by arginine 454 and arginine 483. Glutamine 485 contributes to the D-glucose 6-phosphate binding site. NADP(+)-binding positions include 491–493 and arginine 576; that span reads YLK.

Belongs to the glucose-6-phosphate dehydrogenase family. In terms of assembly, forms homodimer. Interacts with G6PD1. As to expression, expressed in roots, flowers and siliques.

Its subcellular location is the plastid. The protein localises to the chloroplast stroma. The catalysed reaction is D-glucose 6-phosphate + NADP(+) = 6-phospho-D-glucono-1,5-lactone + NADPH + H(+). It functions in the pathway carbohydrate degradation; pentose phosphate pathway; D-ribulose 5-phosphate from D-glucose 6-phosphate (oxidative stage): step 1/3. Its activity is regulated as follows. Regulated by metabolites. Post-translationally inactivated by cysteine-mediated redox modification via the ferredoxin-thioredoxin system in the light and this avoids futile cycles with photosynthetic CO2 fixation. Catalyzes the rate-limiting step of the oxidative pentose-phosphate pathway, which represents a route for the dissimilation of carbohydrates besides glycolysis. The main function of this enzyme is to provide reducing power (NADPH) and pentose phosphates for fatty acid and nucleic acid synthesis which are involved in membrane synthesis and cell division. This is Glucose-6-phosphate 1-dehydrogenase 3, chloroplastic from Arabidopsis thaliana (Mouse-ear cress).